The chain runs to 145 residues: Large ribosomal subunit protein uL16 (145 aa).

Residues 76 to 95 (PKTKTPAETRMGKGKGEPEH) are compositionally biased toward basic and acidic residues. A disordered region spans residues 76–97 (PKTKTPAETRMGKGKGEPEHFV).

It belongs to the universal ribosomal protein uL16 family. As to quaternary structure, part of the 50S ribosomal subunit.

Binds 23S rRNA and is also seen to make contacts with the A and possibly P site tRNAs. This chain is Large ribosomal subunit protein uL16, found in Salinibacter ruber (strain DSM 13855 / M31).